We begin with the raw amino-acid sequence, 240 residues long: Ribonuclease HII (240 aa).

Residues 29 to 220 enclose the RNase H type-2 domain; sequence EPIAGVDEAG…VRRAAGLEPL (192 aa). Asp-35, Glu-36, and Asp-129 together coordinate a divalent metal cation.

This sequence belongs to the RNase HII family. Mn(2+) serves as cofactor. Mg(2+) is required as a cofactor.

It localises to the cytoplasm. The enzyme catalyses Endonucleolytic cleavage to 5'-phosphomonoester.. Its function is as follows. Endonuclease that specifically degrades the RNA of RNA-DNA hybrids. The chain is Ribonuclease HII from Nocardioides sp. (strain ATCC BAA-499 / JS614).